Here is a 1492-residue protein sequence, read N- to C-terminus: Neogenin (1492 aa).

The first 36 residues, 1–36 (MAAEREAGRLLCTSSSRRCCPPPPLLLLLPLLLLLG), serve as a signal peptide directing secretion. Residues 37 to 1136 (RPASGAAATK…PTSPLDSNML (1100 aa)) lie on the Extracellular side of the membrane. Ig-like C2-type domains follow at residues 63–158 (PFYF…AKLT), 163–249 (PRFT…AELK), 254–347 (PEEI…AELT), and 352–437 (PGFL…AQLI). An N-linked (GlcNAc...) asparagine glycan is attached at Asn84. Disulfide bonds link Cys85–Cys140, Cys184–Cys232, and Cys281–Cys331. Asn221 carries an N-linked (GlcNAc...) asparagine glycan. Asn337 carries an N-linked (GlcNAc...) asparagine glycan. A disulfide bond links Cys373 and Cys421. 6 Fibronectin type-III domains span residues 472–566 (APRD…TQPE), 572–662 (PAPN…TLSD), 667–762 (APQN…TFES), 772–862 (VPSS…RPHT), 887–986 (PPVG…LVPT), and 988–1085 (PPKD…TPKA). Residues Asn501 and Asn520 are each glycosylated (N-linked (GlcNAc...) asparagine). N-linked (GlcNAc...) asparagine glycosylation is found at Asn670 and Asn746. N-linked (GlcNAc...) asparagine glycosylation occurs at Asn940. Positions 1072 to 1128 (GPMSEAVQFRTPKADSSDKMPNDQALGSAGKGSRLPDLGSDYKPPMSGSNSPHGSPT) are disordered. The segment covering 1083 to 1092 (PKADSSDKMP) has biased composition (basic and acidic residues). The segment covering 1118–1128 (SGSNSPHGSPT) has biased composition (polar residues). Residues 1137–1157 (LVIIVSVGVITIVVVVVIAVF) traverse the membrane as a helical segment. The Cytoplasmic segment spans residues 1158 to 1492 (CTRRTTSHQK…MKDLNAITTA (335 aa)). Disordered regions lie at residues 1205–1237 (PIDK…SMDS), 1266–1300 (PKMM…HSSS), and 1321–1396 (SMSL…FAVP). Ser1209 and Ser1225 each carry phosphoserine. A compositionally biased stretch (polar residues) spans 1222-1237 (PRNSQDITPVDNSMDS). Thr1229 carries the post-translational modification Phosphothreonine. Composition is skewed to polar residues over residues 1321–1353 (SMSL…TCCT) and 1361–1380 (ATSS…QSLP). Ser1432 is modified (phosphoserine). Thr1435 is modified (phosphothreonine). Ser1463, Ser1465, and Ser1466 each carry phosphoserine.

This sequence belongs to the immunoglobulin superfamily. DCC family. Interacts with BMP2, BMP4, BMP6, and BMP7. Interacts with RGMA and RGMB. Interacts with MYO10. In terms of tissue distribution, widely expressed.

Its subcellular location is the cell membrane. Multi-functional cell surface receptor regulating cell adhesion in many diverse developmental processes, including neural tube and mammary gland formation, myogenesis and angiogenesis. Receptor for members of the BMP, netrin, and repulsive guidance molecule (RGM) families. Netrin-Neogenin interactions result in a chemoattractive axon guidance response and cell-cell adhesion, the interaction between NEO1/Neogenin and RGMa and RGMb induces a chemorepulsive response. The chain is Neogenin from Mus musculus (Mouse).